The primary structure comprises 868 residues: Rifampicin phosphotransferase (868 aa).

The ATP-binding stretch occupies residues 5–317 (TERYVLDLQE…FHIVQSRPIT (313 aa)). ATP-binding residues include Lys26, Arg120, Gly135, Thr139, Gln186, Glu300, Gln312, and Arg314. Residues 330-755 (NHVYVSVGHQ…TSDGEALTGA (426 aa)) form a rifampicin-binding region. Residues 410–430 (FVPSLPDAPPAGPRAGAAPEP) are disordered. A swivel phosphohistidine region spans residues 768–866 (GLPVSTGTVE…VHGTDGYIEI (99 aa)). The active-site Tele-phosphohistidine intermediate is the His826.

It belongs to the rifampicin phosphotransferase family.

The catalysed reaction is rifampicin + ATP + H2O = 21-phosphorifampicin + AMP + phosphate + 2 H(+). Catalyzes the phosphorylation of rifampicin, also known as rifampin (RIF), leading to its inactivation. Confers high level resistance to a variety of clinically used rifamycin antibiotics. Does not show phosphoenolpyruvate (PEP) synthase activity. This is Rifampicin phosphotransferase from Streptomyces sviceus (strain ATCC 29083 / DSM 924 / JCM 4929 / NBRC 13980 / NCIMB 11184 / NRRL 5439 / UC 5370).